Consider the following 204-residue polypeptide: Recombination protein RecR (204 aa).

Residues 63-78 (CNRCFNITVEDPCTIC) form a C4-type zinc finger. Positions 86 to 181 (RQVCVVEEPL…RVTRLARGLP (96 aa)) constitute a Toprim domain.

Belongs to the RecR family.

Its function is as follows. May play a role in DNA repair. It seems to be involved in an RecBC-independent recombinational process of DNA repair. It may act with RecF and RecO. In Herpetosiphon aurantiacus (strain ATCC 23779 / DSM 785 / 114-95), this protein is Recombination protein RecR.